Reading from the N-terminus, the 85-residue chain is UPF0298 protein SUB0431 (85 aa).

It belongs to the UPF0298 family.

The protein resides in the cytoplasm. This is UPF0298 protein SUB0431 from Streptococcus uberis (strain ATCC BAA-854 / 0140J).